Consider the following 262-residue polypeptide: Glutamate 5-kinase (262 aa).

Residue Lys14 participates in ATP binding. Ser54, Asp141, and Asn153 together coordinate substrate. Residues 173–174 (SD) and 214–220 (TGGMVTK) contribute to the ATP site.

Belongs to the glutamate 5-kinase family.

The protein resides in the cytoplasm. The enzyme catalyses L-glutamate + ATP = L-glutamyl 5-phosphate + ADP. Its pathway is amino-acid biosynthesis; L-proline biosynthesis; L-glutamate 5-semialdehyde from L-glutamate: step 1/2. In terms of biological role, catalyzes the transfer of a phosphate group to glutamate to form L-glutamate 5-phosphate. This Symbiobacterium thermophilum (strain DSM 24528 / JCM 14929 / IAM 14863 / T) protein is Glutamate 5-kinase.